The chain runs to 204 residues: Partner of Y14 and mago (204 aa).

Disordered regions lie at residues 1–121 (MGSR…QSVN) and 133–153 (SSNN…EDVE). Residues 7–36 (EQGKRMAELSKNLKEGERILEPTRRPDGTL) are compositionally biased toward basic and acidic residues. Over residues 104-121 (KANSSEDGSASNGSQSVN) the composition is skewed to polar residues. A Nuclear export signal motif is present at residues 195–200 (ELKALE).

Belongs to the pym family. In terms of assembly, interacts with MAGO and Y14. Expressed in root and shoot meristems, cotyledons, vascular tissues of leaves, receptacle of flowers and siliques, and pollen grains.

The protein localises to the cytoplasm. The protein resides in the nucleus. It localises to the nucleolus. It is found in the nucleoplasm. Functionally, key regulator of the exon junction complex (EJC), a multiprotein complex that associates immediately upstream of the exon-exon junction on mRNAs and serves as a positional landmark for the intron exon structure of genes and directs post-transcriptional processes in the cytoplasm such as mRNA export, nonsense-mediated mRNA decay (NMD) or translation. Acts as an EJC disassembly factor, allowing translation-dependent EJC removal and recycling by disrupting mature EJC from spliced mRNAs. Can increase in vitro the expression from reporter constructs that contain leader introns required for the expression of different genes. In association with MAGO and PYM, participates in intron-mediated enhancement of gene expression. In Arabidopsis thaliana (Mouse-ear cress), this protein is Partner of Y14 and mago.